Here is an 881-residue protein sequence, read N- to C-terminus: Fanconi anemia core complex-associated protein 100 (881 aa).

The tract at residues 94–119 (GRSRSTSQDDRDSEDGDQPSPVIPVD) is disordered. Phosphoserine is present on Ser-667.

In terms of assembly, belongs to the multisubunit FA complex composed of FANCA, FANCB, FANCC, FANCE, FANCF, FANCG, FANCL/PHF9, FANCM, FAAP24 and FAAP100. Forms a subcomplex with FANCB and FANCL.

It localises to the nucleus. Its function is as follows. Plays a role in Fanconi anemia-associated DNA damage response network. Regulates FANCD2 monoubiquitination and the stability of the FA core complex. Induces chromosomal instability as well as hypersensitivity to DNA cross-linking agents, when repressed. The chain is Fanconi anemia core complex-associated protein 100 from Homo sapiens (Human).